Here is a 1022-residue protein sequence, read N- to C-terminus: rDNA transcriptional regulator POL5 (1022 aa).

Composition is skewed to acidic residues over residues 706–719 (EEFE…DASE), 728–748 (SESE…EDEA), and 781–802 (DLDQ…ESMD). Disordered regions lie at residues 706–748 (EEFE…EDEA) and 778–805 (GEVD…DDEK). A Phosphoserine modification is found at S789.

The protein belongs to the MYBBP1A family. As to quaternary structure, interacts with FRK1.

The protein localises to the nucleus. Its subcellular location is the nucleolus. The enzyme catalyses DNA(n) + a 2'-deoxyribonucleoside 5'-triphosphate = DNA(n+1) + diphosphate. Its activity is regulated as follows. Stimulated by PCNA and inhibited by aphidicolin. Its function is as follows. Plays an important role in the regulation of rRNA transcription. Binds near or at the enhancer region of rRNA repeating units. May have DNA polymerase activity, but it is not required for in vivo function. This Saccharomyces cerevisiae (strain ATCC 204508 / S288c) (Baker's yeast) protein is rDNA transcriptional regulator POL5.